Reading from the N-terminus, the 693-residue chain is Subtilisin-like protease SBT4.10 (693 aa).

Positions 1–25 (MAKLREASFCALACVLVLFLSFVSA) are cleaved as a signal peptide. The propeptide at 26 to 113 (DTYNRQDKQV…VFPSKKYKLH (88 aa)) is activation peptide. The Inhibitor I9 domain occupies 35–113 (VYVVYMGSLP…VFPSKKYKLH (79 aa)). In terms of domain architecture, Peptidase S8 spans 117–536 (SWDFMGLKEG…SGHIDPIAAI (420 aa)). Residue Asp-145 is the Charge relay system of the active site. The N-linked (GlcNAc...) asparagine glycan is linked to Asn-176. The active-site Charge relay system is His-200. N-linked (GlcNAc...) asparagine glycans are attached at residues Asn-215, Asn-223, Asn-368, Asn-413, and Asn-467. The region spanning 354 to 396 (QYPLVYETSVEKCNNESLTTLALSFLTLTPQSNEQIISMFHTL) is the PA domain. Catalysis depends on Ser-475, which acts as the Charge relay system. Asn-559, Asn-603, and Asn-613 each carry an N-linked (GlcNAc...) asparagine glycan.

It belongs to the peptidase S8 family. In terms of processing, the C-terminal propeptide is autocleaved.

It localises to the secreted. In Arabidopsis thaliana (Mouse-ear cress), this protein is Subtilisin-like protease SBT4.10.